The primary structure comprises 483 residues: ATP-dependent protease ATPase subunit HslU (483 aa).

ATP-binding positions include valine 18 and 60 to 65; that span reads GVGKTE. Low complexity-rich tracts occupy residues 136-147 and 171-181; these read LPGGAPQPAPAQ and AQADASQASPP. The segment at 136–212 is disordered; sequence LPGGAPQPAP…HGGKLDDREV (77 aa). A compositionally biased stretch (polar residues) spans 182–191; sequence TGTGSAPDSR. Over residues 192 to 209 the composition is skewed to basic and acidic residues; the sequence is SSTREKLRTLWHGGKLDD. Residues aspartate 296, glutamate 361, and arginine 433 each contribute to the ATP site.

It belongs to the ClpX chaperone family. HslU subfamily. A double ring-shaped homohexamer of HslV is capped on each side by a ring-shaped HslU homohexamer. The assembly of the HslU/HslV complex is dependent on binding of ATP.

Its subcellular location is the cytoplasm. ATPase subunit of a proteasome-like degradation complex; this subunit has chaperone activity. The binding of ATP and its subsequent hydrolysis by HslU are essential for unfolding of protein substrates subsequently hydrolyzed by HslV. HslU recognizes the N-terminal part of its protein substrates and unfolds these before they are guided to HslV for hydrolysis. The sequence is that of ATP-dependent protease ATPase subunit HslU from Nitratidesulfovibrio vulgaris (strain DSM 19637 / Miyazaki F) (Desulfovibrio vulgaris).